The sequence spans 168 residues: Oocyte-secreted protein 2 (168 aa).

Residues 1-21 form the signal peptide; sequence MGVSMALEVLVYLAVLVWTCA.

The protein belongs to the PLAC1 family. In terms of tissue distribution, expressed in ovaries. Highly expressed in the germinal vesicles oocytes and metaphase II oocytes.

It is found in the secreted. The protein localises to the cytoplasm. This Mus musculus (Mouse) protein is Oocyte-secreted protein 2 (Oosp2).